A 197-amino-acid polypeptide reads, in one-letter code: Phosphoheptose isomerase (197 aa).

An SIS domain is found at 34-196 (MVHCLLGGNK…DRTLFPQDEQ (163 aa)). Position 49–51 (49–51 (NGG)) interacts with substrate. Positions 58 and 62 each coordinate Zn(2+). Substrate-binding positions include glutamate 62, 91–92 (ND), 117–119 (STS), serine 122, and glutamine 172. Zn(2+) is bound by residues glutamine 172 and histidine 180.

The protein belongs to the SIS family. GmhA subfamily. Homotetramer. Zn(2+) is required as a cofactor.

The protein resides in the cytoplasm. The catalysed reaction is 2 D-sedoheptulose 7-phosphate = D-glycero-alpha-D-manno-heptose 7-phosphate + D-glycero-beta-D-manno-heptose 7-phosphate. The protein operates within carbohydrate biosynthesis; D-glycero-D-manno-heptose 7-phosphate biosynthesis; D-glycero-alpha-D-manno-heptose 7-phosphate and D-glycero-beta-D-manno-heptose 7-phosphate from sedoheptulose 7-phosphate: step 1/1. Functionally, catalyzes the isomerization of sedoheptulose 7-phosphate in D-glycero-D-manno-heptose 7-phosphate. The protein is Phosphoheptose isomerase of Shewanella sp. (strain W3-18-1).